A 585-amino-acid polypeptide reads, in one-letter code: MGLLTKVATSRQFSTTRCVAKKLNKYSYIITEPKGQGASQAMLYATGFKKEDFKKPQVGVGSCWWSGNPCNMHLLDLNNRCSQSIEKAGLKAMQFNTIGVSDGISMGTKGMRYSLQSREIIADSFETIMMAQHYDANIAIPSCDKNMPGVMMAMGRHNRPSIMVYGGTILPGHPTCGSSKISKNIDIVSAFQSYGEYISKQFTEEEREDVVEHACPGPGSCGGMYTANTMASAAEVLGLTIPNSSSFPAVSKEKLAECDNIGEYIKKTMELGILPRDILTKEAFENAITYVVATGGSTNAVLHLVAVAHSAGVKLSPDDFQRISDTTPLIGDFKPSGKYVMADLINVGGTQSVIKYLYENNMLHGNTMTVTGDTLAERAKKAPSLPEGQEIIKPLSHPIKANGHLQILYGSLAPGGAVGKITGKEGTYFKGRARVFEEEGAFIEALERGEIKKGEKTVVVIRYEGPRGAPGMPEMLKPSSALMGYGLGKDVALLTDGRFSGGSHGFLIGHIVPEAAEGGPIGLVRDGDEIIIDADNNKIDLLVSDKEMAQRKQSWVAPPPRYTRGTLSKYAKLVSNASNGCVLDA.

A mitochondrion-targeting transit peptide spans 1–20; that stretch reads MGLLTKVATSRQFSTTRCVA. C70 serves as a coordination point for [2Fe-2S] cluster. Residue D102 coordinates Mg(2+). C143 is a [2Fe-2S] cluster binding site. D144 is a binding site for Mg(2+). C221 contacts [2Fe-2S] cluster. E474 is a Mg(2+) binding site. The Proton acceptor role is filled by S500.

It belongs to the IlvD/Edd family. It depends on [2Fe-2S] cluster as a cofactor. The cofactor is Mg(2+).

The protein localises to the mitochondrion. The catalysed reaction is (2R)-2,3-dihydroxy-3-methylbutanoate = 3-methyl-2-oxobutanoate + H2O. It carries out the reaction (2R,3R)-2,3-dihydroxy-3-methylpentanoate = (S)-3-methyl-2-oxopentanoate + H2O. The protein operates within amino-acid biosynthesis; L-isoleucine biosynthesis; L-isoleucine from 2-oxobutanoate: step 3/4. It functions in the pathway amino-acid biosynthesis; L-valine biosynthesis; L-valine from pyruvate: step 3/4. With respect to regulation, catalytic activity is inactivated under iron-limiting conditions. Its function is as follows. Dihydroxyacid dehydratase that catalyzes the third step in the common pathway leading to biosynthesis of branched-chain amino acids. Catalyzes the dehydration of (2R,3R)-2,3-dihydroxy-3-methylpentanoate (2,3-dihydroxy-3-methylvalerate) into 2-oxo-3-methylpentanoate (2-oxo-3-methylvalerate) and of (2R)-2,3-dihydroxy-3-methylbutanoate (2,3-dihydroxyisovalerate) into 2-oxo-3-methylbutanoate (2-oxoisovalerate), the penultimate precursor to L-isoleucine and L-valine, respectively. Required for the synthesis of alpha-isopropylmalate which modulates the activity of LEU3 and subsequently regulates the expression of LEU1. This chain is Dihydroxy-acid dehydratase, mitochondrial, found in Saccharomyces cerevisiae (strain ATCC 204508 / S288c) (Baker's yeast).